Here is a 1508-residue protein sequence, read N- to C-terminus: Pleiotropic ABC efflux transporter of multiple drugs CDR1 (1508 aa).

The tract at residues 1-30 (MSEKPFVDAPPPEDGVAHQVSPHDNGSLSE) is disordered. Residues 1–524 (MSEKPFVDAP…NFLRMKGDPS (524 aa)) are Cytoplasmic-facing. Residues 165–415 (DYWHDMRKID…FLDMGYECPQ (251 aa)) enclose the ABC transporter 1 domain. The chain crosses the membrane as a helical span at residues 525-545 (IVIFSIFGQGVMGLILSSVFY). Residues 546–559 (NLQPTTGSFYYRGA) are Extracellular-facing. A helical transmembrane segment spans residues 560–580 (AMFFAVLFNAFASLLEIMSLF). Residues 581 to 608 (EARPIVEKHKKYALYRPSADALASIISE) lie on the Cytoplasmic side of the membrane. Residues 609-629 (LPVKLCMSTCFNFSFYFMVHF) traverse the membrane as a helical segment. Residues 630-633 (RRDP) are Extracellular-facing. A helical membrane pass occupies residues 634-654 (GRFFFYWLFCGLCTLCMSHMF). Topologically, residues 655–673 (RSLGAVSTSLAAAMTPATS) are cytoplasmic. The chain crosses the membrane as a helical span at residues 674-694 (VLLAMVIFTGFVIPIPSMLGW). Over 695–775 (CRWIQYINPV…EYVNAHKWRN (81 aa)) the chain is Extracellular. The chain crosses the membrane as a helical span at residues 776-796 (LGIVVAYIVVFLGVYIALTEF). The Cytoplasmic segment spans residues 797–1203 (NKGAMQKGEI…TFQQYWRSPG (407 aa)). Residues 839-860 (KISYSDAMEKDSGESSTSDDKL) form a disordered region. A compositionally biased stretch (basic and acidic residues) spans 845–860 (AMEKDSGESSTSDDKL). Positions 867–1110 (FHWKDLTYQV…GLIDYFEKHG (244 aa)) constitute an ABC transporter 2 domain. Position 903–910 (903–910 (GASGAGKT)) interacts with ATP. Residues 1204–1224 (YIYSKFFLVITASLFNGFAFF) form a helical membrane-spanning segment. The Extracellular portion of the chain corresponds to 1225-1239 (HSGTSQQGLQNQMFS). Residues 1240 to 1260 (MFMFYMPLQTLIQQMLPYYVM) form a helical membrane-spanning segment. Residues 1261 to 1288 (QREIYEVREAPSRTFSWFAFIASQITTE) lie on the Cytoplasmic side of the membrane. Residues 1289–1309 (IPFQVVLGTVAFFCWYYPVGL) traverse the membrane as a helical segment. Residues 1310–1326 (YQNATPTDTVHERGALM) lie on the Extracellular side of the membrane. A helical transmembrane segment spans residues 1327–1347 (WLLVTAFYVYTISLGQMVVAF). Residues 1348 to 1362 (MEIADNAANMVNLMF) are Cytoplasmic-facing. The helical transmembrane segment at 1363 to 1383 (IMCLNFCGVLATPEALPGFWI) threads the bilayer. Residues 1384 to 1475 (FMYRCNPFTY…HAVYSERWRN (92 aa)) lie on the Extracellular side of the membrane. A helical membrane pass occupies residues 1476-1496 (FGIFIAFIAINMIGTIFFYWL). At 1497-1508 (ARVPKSSKSKNH) the chain is on the cytoplasmic side.

This sequence belongs to the ABC transporter superfamily.

The protein resides in the cell membrane. It carries out the reaction fluconazole(in) + ATP + H2O = fluconazole(out) + ADP + phosphate + H(+). It catalyses the reaction itraconazole(in) + ATP + H2O = itraconazole(out) + ADP + phosphate + H(+). The enzyme catalyses voriconazole(in) + ATP + H2O = voriconazole(out) + ADP + phosphate + H(+). Its activity is regulated as follows. The bis-benzodioxolylindolinone azoffluxin acts as an inhibitor of the transporter activity. Clorgyline analogs M19 and M25 inhibit the transcporter activity by uncoupling CDR1 ATPase activity from the active transport of substrates. Activity is also inhibited by beauvericin and oligomycin. Its function is as follows. Pleiotropic ABC efflux transporter that confers resistance to numerous chemicals including itraconazole, fluconazole, voriconazole and posaconazole. The sequence is that of Pleiotropic ABC efflux transporter of multiple drugs CDR1 from Candidozyma auris (Yeast).